The primary structure comprises 541 residues: Putative asparagine synthetase [glutamine-hydrolyzing] 1 (541 aa).

Cys2 acts as the For GATase activity in catalysis. The Glutamine amidotransferase type-2 domain maps to 2–213 (CSISGIIVKD…PNSQLIYYLD (212 aa)). L-glutamine is bound by residues 68-72 (RLAIV), 92-94 (NGE), and Asp116. ATP is bound by residues Val289 and 363 to 364 (SG).

It belongs to the asparagine synthetase family.

It catalyses the reaction L-aspartate + L-glutamine + ATP + H2O = L-asparagine + L-glutamate + AMP + diphosphate + H(+). It functions in the pathway amino-acid biosynthesis; L-asparagine biosynthesis; L-asparagine from L-aspartate (L-Gln route): step 1/1. In Methanocaldococcus jannaschii (strain ATCC 43067 / DSM 2661 / JAL-1 / JCM 10045 / NBRC 100440) (Methanococcus jannaschii), this protein is Putative asparagine synthetase [glutamine-hydrolyzing] 1.